The sequence spans 1356 residues: Tenascin-R (1356 aa).

Residues 1 to 31 (MGIEGETVVLKNMLIGVNLILLGSMLKPSEC) form the signal peptide. Residue Asn55 is glycosylated (N-linked (GlcNAc...) asparagine). Positions 127-157 (CASSAQVLQELLSRIEMLEREVSVLRDQCNT) form a coiled coil. Ser176 carries an O-linked (Xyl...) (chondroitin sulfate) serine glycan. 2 N-linked (GlcNAc...) asparagine glycosylation sites follow: Asn180 and Asn198. 3 EGF-like domains span residues 188–199 (CICNEGWFGKNC), 204–230 (CPLG…GDDC), and 235–261 (CPTD…GEDC). O-linked (Xyl...) (chondroitin sulfate) serine glycosylation occurs at Ser271. Asn278 carries N-linked (GlcNAc...) asparagine glycosylation. EGF-like domains are found at residues 281 to 292 (CLCQEGYAGEDC) and 293 to 324 (SQRR…PDCS). Intrachain disulfides connect Cys297–Cys307 and Cys314–Cys323. Ser302 is a glycosylation site (O-linked (Xyl...) (chondroitin sulfate) serine). 9 consecutive Fibronectin type-III domains span residues 328–419 (PPED…TPQG), 420–504 (LQFK…TVID), 505–596 (GPTQ…IDAP), 597–686 (KNLR…TELD), 687–776 (SPRD…FRPI), 777–864 (SHLH…TGID), 865–953 (PPKN…AMDS), 954–1040 (PMDL…TLLD), and 1041–1129 (PPAN…GGRV). N-linked (GlcNAc...) asparagine glycans are attached at residues Asn391, Asn469, and Asn580. Phosphoserine is present on Ser723. N-linked (GlcNAc...) asparagine glycans are attached at residues Asn790, Asn868, Asn873, Asn1034, Asn1044, and Asn1259. A Fibrinogen C-terminal domain is found at 1127 to 1342 (GRVFSHPQDC…FVEMKMRPYI (216 aa)).

It belongs to the tenascin family. Forms oligomers. Interacts with TNC and FN1. Interacts with BCAN and ACAN in a calcium -dependent manner. Interacts with CNTN1, SCN2B, PTPRZ1, and CSPG3. In terms of processing, contains N-linked oligosaccharides, O-linked sialylated structures. Contains O-linked chondroitin sulfate glycosaminoglycans. Contains N-linked oligosaccharides with a sulfated carbohydrate structure type GalNAc-4-SO4 or HNK-1 (SO4-3-GlcUABeta1,3GalBeta1,4GlcNAc). The levels of HNK-1 rise and fall in parallel to those of TNR during postnatal development of the cerebellum. In contrast, levels of GalNAc-4-SO4 are regulated independently from those of TNR, rising late in cerebellar development and continuing into adulthood. Early in postnatal development, GalNAc-4-SO4 is found predominantly on isoform 1, whereas in the adult it is predominantly on isoform 2. In terms of tissue distribution, brain-specific. Expressed in oligodendrocytes and small subsets of neurons (mainly interneurons and motoneurons) of the cerebellum, hippocampus and olfactory bulb. Expressed in dorsal root ganglia.

The protein resides in the secreted. It is found in the extracellular space. It localises to the extracellular matrix. In terms of biological role, neural extracellular matrix (ECM) protein involved in interactions with different cells and matrix components. Theses interactions can influence cellular behavior by either evoking a stable adhesion and differentiation, or repulsion and inhibition of neurite growth. Binding to cell surface gangliosides inhibits RGD-dependent integrin-mediated cell adhesion and results in an inhibition of PTK2/FAK1 (FAK) phosphorylation and cell detachment. Binding to membrane surface sulfatides results in a oligodendrocyte adhesion and differentiation. Interaction with CNTN1 induces a repulsion of neurons and an inhibition of neurite outgrowth. Interacts with SCN2B may play a crucial role in clustering and regulation of activity of sodium channels at nodes of Ranvier. TNR-linked chondroitin sulfate glycosaminoglycans are involved in the interaction with FN1 and mediates inhibition of cell adhesion and neurite outgrowth. The highly regulated addition of sulfated carbohydrate structure may modulate the adhesive properties of TNR over the course of development and during synapse maintenance. This chain is Tenascin-R (Tnr), found in Rattus norvegicus (Rat).